Here is a 156-residue protein sequence, read N- to C-terminus: Transcription elongation factor GreA (156 aa).

Residues 2 to 78 (AKEIILTQEG…MISKAKLIED (77 aa)) are a coiled coil.

Belongs to the GreA/GreB family.

Functionally, necessary for efficient RNA polymerase transcription elongation past template-encoded arresting sites. The arresting sites in DNA have the property of trapping a certain fraction of elongating RNA polymerases that pass through, resulting in locked ternary complexes. Cleavage of the nascent transcript by cleavage factors such as GreA or GreB allows the resumption of elongation from the new 3'terminus. GreA releases sequences of 2 to 3 nucleotides. The protein is Transcription elongation factor GreA of Mesoplasma florum (strain ATCC 33453 / NBRC 100688 / NCTC 11704 / L1) (Acholeplasma florum).